Consider the following 681-residue polypeptide: Spermatogenesis-associated protein 21 (681 aa).

The span at 1-14 shows a compositional bias: basic and acidic residues; the sequence is MENRNTHTHPESKA. 2 disordered regions span residues 1-284 and 298-336; these read MENR…ANSR and EEATHRRTLKSRGLTARRSPKTVTSVSTSGPISSSVPTL. Composition is skewed to polar residues over residues 83–94 and 159–173; these read QEPSARPRTTQD and PSNSRSQPLKNNSPS. Residues 251–261 show a composition bias toward basic and acidic residues; it reads PEERDTEKKEL. Positions 264-281 are enriched in polar residues; sequence GQKQRQQALSAAGTQGPA. The span at 319 to 335 shows a compositional bias: low complexity; that stretch reads TVTSVSTSGPISSSVPT. Residues 464–499 form the EF-hand domain; that stretch reads FTPAQVEEALMSADVNGDGHVDFKDFLAVMTDTKRF. Residues Asp477, Asn479, Asp481, His483, and Asp488 each coordinate Ca(2+). The interval 653-681 is disordered; that stretch reads LFFQPGQQGSREHSSDSRKWLSSMPARTH. The span at 662–671 shows a compositional bias: basic and acidic residues; sequence SREHSSDSRK.

In terms of biological role, involved in the differentiation of haploid spermatids. The chain is Spermatogenesis-associated protein 21 (Spata21) from Mus musculus (Mouse).